The chain runs to 509 residues: Serine/threonine protein kinase OSK4 (509 aa).

One can recognise a Protein kinase domain in the interval 17–269 (YNLGRTLGIG…IREIREHQWF (253 aa)). ATP contacts are provided by residues 23-31 (LGIGSFGKV) and Lys46. Catalysis depends on Asp140, which acts as the Proton acceptor. Residues 290-330 (MIDEDTLQDVVNLGYEKDHVCESLRNRLQNEATVAYYLLLD) form the UBA domain. The KA1 domain occupies 460 to 508 (NGRLPAVIKFEIQLYKSRDEKYLLDMQRVTGPQLLFLDFCAAFLTKLRV).

Belongs to the protein kinase superfamily. Ser/Thr protein kinase family. As to quaternary structure, interacts with HDR1. As to expression, strongly expressed in immature seeds. Mostly expressed in panicles, leaf sheaths and roots, and to a lower extent, in germinating seeds and leaf blades.

The protein resides in the nucleus. It carries out the reaction L-seryl-[protein] + ATP = O-phospho-L-seryl-[protein] + ADP + H(+). The enzyme catalyses L-threonyl-[protein] + ATP = O-phospho-L-threonyl-[protein] + ADP + H(+). Its function is as follows. Suppressor of flowering in long days (LD) via the that up-regulation of HD1 and the down-regulation of EHD1. Can phosphorylate HD1 in the presence of HDR1. This Oryza sativa subsp. indica (Rice) protein is Serine/threonine protein kinase OSK4.